The following is a 64-amino-acid chain: Large ribosomal subunit protein bL35 (64 aa).

Over residues 38 to 53 (KRKANLNAPKHVHHTN) the composition is skewed to basic residues. Residues 38-64 (KRKANLNAPKHVHHTNAHSVMSLLCRA) form a disordered region.

This sequence belongs to the bacterial ribosomal protein bL35 family.

This chain is Large ribosomal subunit protein bL35, found in Helicobacter pylori (strain G27).